The chain runs to 367 residues: Glutamate 5-kinase (367 aa).

Residue Lys9 coordinates ATP. Ser49, Asp136, and Asn148 together coordinate substrate. ATP contacts are provided by residues 168-169 (TD) and 210-216 (TGGMKSK). Positions 276 to 350 (SGQIEIDAGA…GMQSQHIQAR (75 aa)) constitute a PUA domain.

The protein belongs to the glutamate 5-kinase family.

The protein resides in the cytoplasm. The catalysed reaction is L-glutamate + ATP = L-glutamyl 5-phosphate + ADP. The protein operates within amino-acid biosynthesis; L-proline biosynthesis; L-glutamate 5-semialdehyde from L-glutamate: step 1/2. In terms of biological role, catalyzes the transfer of a phosphate group to glutamate to form L-glutamate 5-phosphate. The polypeptide is Glutamate 5-kinase (Bacillus cereus (strain ATCC 10987 / NRS 248)).